A 674-amino-acid chain; its full sequence is DNA ligase (674 aa).

Residues 34–38, 83–84, and Glu-117 contribute to the NAD(+) site; these read DFEFD and SL. Lys-119 (N6-AMP-lysine intermediate) is an active-site residue. Arg-140, Glu-184, Lys-297, and Lys-321 together coordinate NAD(+). Positions 415, 418, 433, and 439 each coordinate Zn(2+). In terms of domain architecture, BRCT spans 598–674; sequence LVNNNFEGQS…IDEDEFERML (77 aa).

This sequence belongs to the NAD-dependent DNA ligase family. LigA subfamily. Requires Mg(2+) as cofactor. The cofactor is Mn(2+).

It carries out the reaction NAD(+) + (deoxyribonucleotide)n-3'-hydroxyl + 5'-phospho-(deoxyribonucleotide)m = (deoxyribonucleotide)n+m + AMP + beta-nicotinamide D-nucleotide.. DNA ligase that catalyzes the formation of phosphodiester linkages between 5'-phosphoryl and 3'-hydroxyl groups in double-stranded DNA using NAD as a coenzyme and as the energy source for the reaction. It is essential for DNA replication and repair of damaged DNA. The chain is DNA ligase from Chlorobaculum tepidum (strain ATCC 49652 / DSM 12025 / NBRC 103806 / TLS) (Chlorobium tepidum).